Reading from the N-terminus, the 725-residue chain is Another transcription unit protein (725 aa).

The span at 1-10 (MGSQNSDDDS) shows a compositional bias: acidic residues. 3 disordered regions span residues 1 to 379 (MGSQ…PETR), 566 to 603 (RQAM…EGSD), and 617 to 725 (YKKG…SDND). Residues 11–70 (GSSGSSRSGSRSVTPQGGSAPGSQRSRRSGSGSDRSRSGSRSSRSRSGSGSPRSARSGSA) are compositionally biased toward low complexity. Positions 82 to 101 (RSKRSRSAHSRRSGSARSRK) are enriched in basic residues. The segment covering 104 to 116 (TPESPQSHRSGSL) has biased composition (polar residues). The span at 117–140 (QSRKSGSPQSRRSGSPQSRKSGST) shows a compositional bias: low complexity. A compositionally biased stretch (basic residues) spans 141 to 160 (HSRRSGSAHSRRSGSARSRK). Phosphoserine occurs at positions 175, 186, 188, and 190. The span at 206–223 (SRSRSRSRSGSRTSRSRS) shows a compositional bias: basic residues. The span at 224-242 (KTGTPSPNRSRSGSASGSG) shows a compositional bias: low complexity. A phosphoserine mark is found at Ser-265, Ser-267, and Ser-269. The residue at position 286 (Thr-286) is a Phosphothreonine. 3 positions are modified to phosphoserine: Ser-288, Ser-290, and Ser-312. The segment covering 306–318 (GDADDISDDEDEA) has biased composition (acidic residues). The span at 325–353 (SPVRSKSRSQSKSHSHSRSMSHSRSRSRS) shows a compositional bias: basic residues. Residues 354–369 (RSRDKVESQVESAPKE) show a composition bias toward basic and acidic residues. Ser-355 is modified (phosphoserine). Over residues 571–582 (NQHKSLPKKKKP) the composition is skewed to basic residues. A Phosphothreonine modification is found at Thr-593. Ser-595, Ser-602, and Ser-631 each carry phosphoserine. Position 632 is a phosphothreonine (Thr-632). 3 positions are modified to phosphoserine: Ser-635, Ser-636, and Ser-642. The segment covering 644 to 665 (FEARRSKKVDKAKASKALRDSD) has biased composition (basic and acidic residues). Gly residues predominate over residues 710-725 (SGSGSGSGSGSGSDND).

The protein is Another transcription unit protein (Atu) of Drosophila melanogaster (Fruit fly).